A 459-amino-acid chain; its full sequence is Zinc finger protein 213 (459 aa).

Positions 45-126 constitute an SCAN box domain; that stretch reads RQRFRQFCYG…VALVEDLQKQ (82 aa). The segment at 128–188 is disordered; it reads VKAWRQDVPS…ALLKEGRPGE (61 aa). A KRAB domain is found at 202–292; the sequence is VALGDIPFYF…ENRPRAALGP (91 aa). 5 consecutive C2H2-type zinc fingers follow at residues 317–339, 345–367, 373–395, 401–423, and 429–451; these read HSCGQCGKRFRWGSDLARHQRTH, HKCPECDKSFRSSSDLVRHQGVH, FSCSECGKSFSRSAYLADHQRIH, FGCSDCGKSFSLRSYLLDHRRVH, and FGCGECDKSFKQRAHLIAHQSLH.

This sequence belongs to the krueppel C2H2-type zinc-finger protein family. In terms of tissue distribution, widely expressed with highest levels in testis.

It is found in the nucleus. Functionally, may be involved in transcriptional regulation. This chain is Zinc finger protein 213 (ZNF213), found in Homo sapiens (Human).